The sequence spans 208 residues: Small ribosomal subunit protein uS4 (208 aa).

An S4 RNA-binding domain is found at serine 98–aspartate 158.

Belongs to the universal ribosomal protein uS4 family. Part of the 30S ribosomal subunit. Contacts protein S5. The interaction surface between S4 and S5 is involved in control of translational fidelity.

One of the primary rRNA binding proteins, it binds directly to 16S rRNA where it nucleates assembly of the body of the 30S subunit. Its function is as follows. With S5 and S12 plays an important role in translational accuracy. This is Small ribosomal subunit protein uS4 from Desulfosudis oleivorans (strain DSM 6200 / JCM 39069 / Hxd3) (Desulfococcus oleovorans).